The primary structure comprises 940 residues: Isoleucine--tRNA ligase (940 aa).

The short motif at 58-68 (PYANGSIHIGH) is the 'HIGH' region element. Residue Glu564 coordinates L-isoleucyl-5'-AMP. A 'KMSKS' region motif is present at residues 605–609 (KMSKS). Residue Lys608 participates in ATP binding. Zn(2+)-binding residues include Cys903, Cys906, Cys923, and Cys926.

It belongs to the class-I aminoacyl-tRNA synthetase family. IleS type 1 subfamily. In terms of assembly, monomer. Zn(2+) is required as a cofactor.

It is found in the cytoplasm. The catalysed reaction is tRNA(Ile) + L-isoleucine + ATP = L-isoleucyl-tRNA(Ile) + AMP + diphosphate. Catalyzes the attachment of isoleucine to tRNA(Ile). As IleRS can inadvertently accommodate and process structurally similar amino acids such as valine, to avoid such errors it has two additional distinct tRNA(Ile)-dependent editing activities. One activity is designated as 'pretransfer' editing and involves the hydrolysis of activated Val-AMP. The other activity is designated 'posttransfer' editing and involves deacylation of mischarged Val-tRNA(Ile). The protein is Isoleucine--tRNA ligase of Shewanella sediminis (strain HAW-EB3).